The chain runs to 2126 residues: Serine/threonine-protein kinase WNK1 (2126 aa).

Disordered stretches follow at residues 1–80 and 93–202; these read MSDG…FFRR and LPGL…QQQD. Serine 17 carries the post-translational modification Phosphoserine. Residues 48–64 are compositionally biased toward basic and acidic residues; the sequence is RTEEYRRRRHTMDKDSR. Threonine 58 carries the post-translational modification Phosphothreonine. Low complexity-rich tracts occupy residues 101–111 and 127–141; these read PQPSVPAVVPQ and VASQ…AASP. Phosphoserine occurs at positions 165 and 172. Residues 221–479 enclose the Protein kinase domain; sequence LKFDIEIGRG…IKDLLNHAFF (259 aa). Serine 231 provides a ligand contact to ATP. Residues phenylalanine 283 and leucine 299 each coordinate chloride. Residues 301-304 and lysine 351 each bind ATP; that span reads TELM. The active-site Proton acceptor is the aspartate 368. Chloride-binding residues include leucine 369 and leucine 371. Phosphoserine; by autocatalysis occurs at positions 378 and 382. Residues 488 to 555 are autoinhibitory domain; sequence ELAEEDDGEK…VCEGDHKTMA (68 aa). A compositionally biased stretch (basic and acidic residues) spans 573–588; that stretch reads QLVREEQEKRKQEESS. Residues 573–865 are disordered; it reads QLVREEQEKR…SRHEKTSRPK (293 aa). Residues 593 to 614 show a composition bias toward polar residues; the sequence is NEQQASVSQAGIQPLSVASTGI. The segment covering 615-626 has biased composition (low complexity); the sequence is PTAPTTSASVST. The interaction with KLHL3 stretch occupies residues 629 to 639; that stretch reads EPEEPEADQHQ. 3 stretches are compositionally biased toward polar residues: residues 638-682, 695-705, and 713-733; these read HQQL…GSQH, TVSSIQAQSQP, and SMAQ…VLSS. The span at 734 to 746 shows a compositional bias: low complexity; sequence QPVQHPQQQGIQP. Residues 750–789 show a composition bias toward polar residues; it reads PQQAVQYSLPQAASSSEGTVQPVSQPQVSAGTQSSTQGVS. The segment covering 793 to 823 has biased composition (low complexity); sequence PPEQTPITQSQPTQPVPLVSSVDSAHSDVAS. A compositionally biased stretch (polar residues) spans 826-836; that stretch reads SDGNENAPSSS. Residues 844 to 865 show a composition bias toward basic residues; sequence TKRHYRKSVRSRSRHEKTSRPK. The short motif at 1003 to 1006 is the RFXV motif 1 element; sequence RFIV. Serine 1007 carries the post-translational modification Phosphoserine. 2 disordered regions span residues 1474-1507 and 1557-1595; these read GQVS…LTKT and IPVT…ASSS. A compositionally biased stretch (low complexity) spans 1477–1496; that stretch reads STPGTHASAPASTATGAKPG. Residues 1567–1583 are compositionally biased toward polar residues; it reads STMSSTAVTEAGSQPQK. The RFXV motif 2 signature appears at 1604 to 1607; it reads RFQV. A disordered region spans residues 1610-1695; sequence TMDDAQKERK…TKVGRFQVTT (86 aa). A compositionally biased stretch (basic and acidic residues) spans 1613–1629; sequence DAQKERKNRSEDTKSVH. The span at 1632 to 1650 shows a compositional bias: low complexity; that stretch reads SSTSESSVLSSSSPESTLV. 2 consecutive short sequence motifs (RFXV motif) follow at residues 1690–1693 and 1702–1705; these read RFQV and RFSV. The span at 1709-1719 shows a compositional bias: basic and acidic residues; sequence EDKVTELKKEG. 3 disordered regions span residues 1709–1783, 1856–1940, and 1952–1990; these read EDKV…LCSK, VIIP…NLYS, and SLSA…KGTF. At serine 1723 the chain carries Phosphoserine. Over residues 1738-1747 the composition is skewed to basic and acidic residues; sequence PKKEKPELAE. Phosphoserine is present on residues serine 1755, serine 1756, serine 1771, serine 1773, serine 1776, and serine 1865. Residues 1866–1878 are compositionally biased toward basic residues; that stretch reads GRRRRPTKSKGSK. Residues 1879-1889 show a composition bias toward low complexity; the sequence is SSRSSSLGNKS. Polar residues predominate over residues 1890-1940; it reads PQLSGNLSGQSGTSVLNPQQTLHPPGNTPETGHNQLLQPLKPSPSSDNLYS. Residues 1957 to 1981 are compositionally biased toward low complexity; that stretch reads GQGTSSTNTVGGTVSSQAAQAQPPA. An amphipathic alpha-helix region spans residues 1985–2005; sequence SRKGTFTDDLHKLVDNWARDA. Phosphoserine occurs at positions 2014 and 2030. The tract at residues 2076 to 2097 is disordered; sequence PFGTQWSGTGGPAPQPLGQFQP. A phosphoserine mark is found at serine 2114 and serine 2116.

This sequence belongs to the protein kinase superfamily. Ser/Thr protein kinase family. WNK subfamily. Interacts with WNK3. Interacts with WNK4; inhibiting the activity of WNK4. Interacts with SGK1; promoting its activation. Associates with the mTORC2 complex. Interacts with UVRAG. Interacts (via amphipathic alpha-helix region) with EMC2; promoting the ER membrane protein complex assembly. As to quaternary structure, interacts with isoform 1; inhibiting isoform 1 activity. Mg(2+) is required as a cofactor. Post-translationally, autophosphorylated at Ser-378 and Ser-382, promoting its activity. Autophosphorylation at Ser-382 is inhibited by intracellular calcium. Phosphorylation at Thr-58 increases ability to activate SGK1. Ubiquitinated by the BCR(KLHL3) complex, leading to its degradation. Also ubiquitinated by the BCR(KLHL2) complex. In terms of processing, may be O-glycosylated.

The protein localises to the cytoplasm. The protein resides in the nucleus. Its subcellular location is the cytoskeleton. It localises to the spindle. It carries out the reaction L-seryl-[protein] + ATP = O-phospho-L-seryl-[protein] + ADP + H(+). The catalysed reaction is L-threonyl-[protein] + ATP = O-phospho-L-threonyl-[protein] + ADP + H(+). Its activity is regulated as follows. Activated in response to hyperosmotic stress: cell shrinkage promotes formation of a membraneless compartment that concentrates WNK1 with its substrates, OXSR1/OSR1 and STK39/SPAK. Activation requires autophosphorylation of Ser-382 and, to a lower extent, Ser-378. Autophosphorylation and subsequent activation is inhibited by increases in intracellular ionic strength: Cl(-) potently inhibits WNK1 kinase activity via direct binding. Also inhibited by K(+) ions. Inhibited by Compound 12 ((5-Chloro-2-(2-((methyl-d3)amino)thiazol-4-yl)- pyridin-4-yl)(4-(4-chlorobenzyl)piperazin-1-yl)methanone). Its function is as follows. Serine/threonine-protein kinase component of the WNK1-SPAK/OSR1 kinase cascade, which acts as a key regulator of blood pressure and regulatory volume increase by promoting ion influx. WNK1 mediates regulatory volume increase in response to hyperosmotic stress by acting as a molecular crowding sensor, which senses cell shrinkage and mediates formation of a membraneless compartment by undergoing liquid-liquid phase separation. The membraneless compartment concentrates WNK1 with its substrates, OXSR1/OSR1 and STK39/SPAK, promoting WNK1-dependent phosphorylation and activation of downstream kinases OXSR1/OSR1 and STK39/SPAK. Following activation, OXSR1/OSR1 and STK39/SPAK catalyze phosphorylation of ion cotransporters SLC12A1/NKCC2, SLC12A2/NKCC1, SLC12A5/KCC2 and SLC12A6/KCC3, regulating their activity. Phosphorylation of Na-K-Cl cotransporters SLC12A2/NKCC1 and SLC12A2/NKCC1 promote their activation and ion influx; simultaneously, phosphorylation of K-Cl cotransporters SLC12A5/KCC2 and SLC12A6/KCC3 inhibit their activity, blocking ion efflux. Also acts as a regulator of angiogenesis in endothelial cells. Also acts independently of the WNK1-SPAK/OSR1 kinase cascade by catalyzing phosphorylation of other substrates, such as SYT2, PCF11 and NEDD4L. Mediates phosphorylation of SYT2, regulating SYT2 association with phospholipids and membrane-binding. Regulates mRNA export in the nucleus by mediating phosphorylation of PCF11, thereby decreasing the association between PCF11 and POLR2A/RNA polymerase II and promoting mRNA export to the cytoplasm. Acts as a negative regulator of autophagy. Required for the abscission step during mitosis, independently of the WNK1-SPAK/OSR1 kinase cascade. WNK1 may also play a role in actin cytoskeletal reorganization. Also acts as a scaffold protein independently of its protein kinase activity: negatively regulates cell membrane localization of various transporters and channels, such as SLC4A4, SLC26A6, SLC26A9, TRPV4 and CFTR. Involved in the regulation of epithelial Na(+) channel (ENaC) by promoting activation of SGK1 in a kinase-independent manner. Probably activates SGK1 by acting as a scaffold protein that promotes the recruitment of SGK1 to the mTORC2 complex in response to chloride, leading to mTORC2-dependent phosphorylation and activation of SGK1. Acts as an assembly factor for the ER membrane protein complex independently of its protein kinase activity: associates with EMC2 in the cytoplasm via its amphipathic alpha-helix, and prevents EMC2 ubiquitination and subsequent degradation, thereby promoting EMC2 stabilization. Kinase-defective isoform specifically expressed in kidney, which acts as a dominant-negative regulator of the longer isoform 1. Does not directly inhibit WNK4 and has no direct effect on sodium and chloride ion transport. Down-regulates sodium-chloride cotransporter activity indirectly by inhibiting isoform 1, it associates with isoform 1 and attenuates its kinase activity. In kidney, may play an important role regulating sodium and potassium balance. In terms of biological role, kinase-defective isoform produced by alternative promoter usage and alternative splicing. This chain is Serine/threonine-protein kinase WNK1, found in Rattus norvegicus (Rat).